The primary structure comprises 256 residues: 2,3,4,5-tetrahydropyridine-2,6-dicarboxylate N-acetyltransferase (256 aa).

Belongs to the transferase hexapeptide repeat family. DapH subfamily.

It carries out the reaction (S)-2,3,4,5-tetrahydrodipicolinate + acetyl-CoA + H2O = L-2-acetamido-6-oxoheptanedioate + CoA. Its pathway is amino-acid biosynthesis; L-lysine biosynthesis via DAP pathway; LL-2,6-diaminopimelate from (S)-tetrahydrodipicolinate (acetylase route): step 1/3. Functionally, catalyzes the transfer of an acetyl group from acetyl-CoA to tetrahydrodipicolinate. In Lactococcus lactis subsp. lactis (strain IL1403) (Streptococcus lactis), this protein is 2,3,4,5-tetrahydropyridine-2,6-dicarboxylate N-acetyltransferase.